The chain runs to 230 residues: Claudin-2 (230 aa).

Residues 1–7 (MASLGLQ) are Cytoplasmic-facing. The chain crosses the membrane as a helical span at residues 8–28 (LVGYILGLLGLLGTLVAMLLP). Topologically, residues 29–81 (SWKTSSYVGASIVTAVGFSKGLWMECATHSTGITQCDIYSTLLGLPADIQAAQ) are extracellular. A disulfide bond links Cys-54 and Cys-64. Residues 82 to 102 (AMMVTSSAISSLACIISVVGM) form a helical membrane-spanning segment. Residues 103–116 (RCTVFCQESRAKDR) are Cytoplasmic-facing. Residues 117–137 (VAVAGGVFFILGGLLGFIPVA) traverse the membrane as a helical segment. Residues 138–162 (WNLHGILRDFYSPLVPDSMKFEIGE) lie on the Extracellular side of the membrane. Residues 163–183 (ALYLGIISSLFSLIAGIILCF) form a helical membrane-spanning segment. Over 184-230 (SCSSQRNRSNYYDAYQAQPLATRSSPRPGQPPKVKSEFNSYSLTGYV) the chain is Cytoplasmic. A disordered region spans residues 205 to 230 (TRSSPRPGQPPKVKSEFNSYSLTGYV). Lys-218 participates in a covalent cross-link: Glycyl lysine isopeptide (Lys-Gly) (interchain with G-Cter in SUMO). Phosphoserine occurs at positions 219 and 223. Residues 220-230 (EFNSYSLTGYV) are compositionally biased toward polar residues. The tract at residues 229–230 (YV) is interactions with TJP1, TJP2 and TJP3.

This sequence belongs to the claudin family. As to quaternary structure, can form homo- and heteropolymers with other claudins to mediate paracellular barrier and channel functions of tight junctions in response to physiological stimuli. Homopolymers interact with CLDN3, but not CLDN1, homopolymers. Directly interacts with TJP1/ZO-1, TJP2/ZO-2 and TJP3/ZO-3. In terms of processing, the disulfide bond is necessary for pore formation, but is not required for correct protein trafficking.

It is found in the cell junction. It localises to the tight junction. The protein resides in the cell membrane. It catalyses the reaction Na(+)(in) = Na(+)(out). The catalysed reaction is K(+)(in) = K(+)(out). The enzyme catalyses Rb(+)(in) = Rb(+)(out). It carries out the reaction Li(+)(in) = Li(+)(out). It catalyses the reaction Cs(+)(in) = Cs(+)(out). The catalysed reaction is Ca(2+)(in) = Ca(2+)(out). The enzyme catalyses methylamine(out) = methylamine(in). It carries out the reaction choline(out) = choline(in). It catalyses the reaction H2O(in) = H2O(out). Functionally, forms paracellular channels: polymerizes in tight junction strands with cation- and water-selective channels through the strands, conveying epithelial permeability in a process known as paracellular tight junction permeability. In intestinal epithelium, allows for sodium and water fluxes from the peritoneal side to the lumen of the intestine to regulate nutrient absorption and clear enteric pathogens as part of mucosal immune response. In kidney, allows passive sodium and calcium reabsorption across proximal tubules from the lumen back to the bloodstream. In the hepatobiliary tract, allows paracellular water and cation fluxes in the hepatic perivenous areas and biliary epithelium to generate bile flow and maintain osmotic gradients. This is Claudin-2 from Homo sapiens (Human).